A 114-amino-acid chain; its full sequence is uncharacterized protein (114 aa).

The helical transmembrane segment at 7 to 27 (YIFSFWFFFLVEYVVTFRLFL) threads the bilayer. Residues 90–114 (KNSPEKKKFKRGLPISSKYTDGKKR) are disordered.

It localises to the membrane. This is an uncharacterized protein from Saccharomyces cerevisiae (strain ATCC 204508 / S288c) (Baker's yeast).